Here is a 619-residue protein sequence, read N- to C-terminus: P-granule-associated protein deps-1 (619 aa).

Residues 62–101 (NFDNIEEAKNLERRSKIPLKFGEVILWNESDCDHDKRIIL) form a required for prg-1 binding region. Composition is skewed to low complexity over residues 563 to 592 (SRAT…AATS) and 600 to 619 (GPSS…SSRV). The tract at residues 563-619 (SRATSARTTPAGSSIGSRSSIQSRASAATSVSSNRFVGPSSRRTPSGTPQSSTSSRV) is disordered.

As to quaternary structure, interacts (via N-terminus) with prg-1; the interaction is direct. May interact with edg-1. In terms of tissue distribution, expressed in germ cells.

The protein resides in the cytoplasmic granule. The protein localises to the cytoplasm. It is found in the perinuclear region. Functionally, component of P-granules which is required for P-granule formation and integrity in adult germ cells. Promotes the accumulation of glh-1 mRNA and localization of pgl-1 to P-granules. Involved in RNA-mediated gene silencing (RNAi) in the germline. In particular, it is required for piwi-interacting RNA (piRNA) gene silencing and positively regulates the formation of secondary 22G-RNAs, which are RNA-dependent RNA polymerase-derived endo-siRNAs, typically 22 nucleotides in length with a 5'guanosine residue. Its role in RNAi may also be through positively regulating the expression of the dsRNA-binding protein rde-4. Plays a role in small RNA-directed transgenerational epigenetic inheritance. The sequence is that of P-granule-associated protein deps-1 from Caenorhabditis elegans.